We begin with the raw amino-acid sequence, 88 residues long: Small ribosomal subunit protein bS20 (88 aa).

The interval methionine 1–arginine 25 is disordered. Basic residues predominate over residues alanine 7 to histidine 20.

Belongs to the bacterial ribosomal protein bS20 family.

Binds directly to 16S ribosomal RNA. In Psychrobacter sp. (strain PRwf-1), this protein is Small ribosomal subunit protein bS20.